Here is a 259-residue protein sequence, read N- to C-terminus: MLWGESMEEIVNKITKFIREKVEEANANGVVVGLSGGIDSSVTAYLCVKALGKDKVLGLIMPEKNTNPKDVEHAKMVAENLGIKYIISDITDILKAFGAGGYVPTREFDKIADGNLKARIRMCILYYFANKYNLLVAGTSNKSEIYVGYGTKHGDIACDIRPIGNLFKTEVKKLAKYIGVPKEIIEKPPSAGLWEGQTDEEELDIKYETLDTILKLYEKGKTPEEIHKETNIPLETINYVFDLIKKNEHKRTLPPTPEI.

Residue 33–40 (GLSGGIDS) participates in ATP binding. D39 provides a ligand contact to Mg(2+). Residue R119 participates in deamido-NAD(+) binding. T139 is an ATP binding site. Position 144 (E144) interacts with Mg(2+). Residues K152 and D159 each coordinate deamido-NAD(+). K168 and S190 together coordinate ATP. 249–250 (HK) provides a ligand contact to deamido-NAD(+).

The protein belongs to the NAD synthetase family. In terms of assembly, homodimer.

The enzyme catalyses deamido-NAD(+) + NH4(+) + ATP = AMP + diphosphate + NAD(+) + H(+). The protein operates within cofactor biosynthesis; NAD(+) biosynthesis; NAD(+) from deamido-NAD(+) (ammonia route): step 1/1. Functionally, catalyzes the ATP-dependent amidation of deamido-NAD to form NAD. Uses ammonia as a nitrogen source. The sequence is that of NH(3)-dependent NAD(+) synthetase from Methanocaldococcus jannaschii (strain ATCC 43067 / DSM 2661 / JAL-1 / JCM 10045 / NBRC 100440) (Methanococcus jannaschii).